Reading from the N-terminus, the 464-residue chain is Olfactomedin (464 aa).

An N-terminal signal peptide occupies residues 1–16; the sequence is MYICLLTLVLIHAAAA. N-linked (GlcNAc...) asparagine glycans are attached at residues Asn21, Asn85, Asn143, Asn228, Asn279, and Asn383. Residues 192 to 464 enclose the Olfactomedin-like domain; the sequence is SCQHQGLAHI…LLHYDIALKP (273 aa). Cys193 and Cys394 are joined by a disulfide.

Oligomer; disulfide-linked. Post-translationally, most, if not all, of the six potential sites for N-glycosylation carry carbohydrate moieties of 8-10 sugar residues. Expressed exclusively in olfactory neuroepithelium.

It localises to the secreted. The protein resides in the extracellular space. Its function is as follows. May influence the maintenance, growth, or differentiation of chemosensory cilia on the apical dendrites of olfactory neurons. Major component of the extracellular matrix of the olfactory neuroepithelium. This Aquarana catesbeiana (American bullfrog) protein is Olfactomedin.